A 173-amino-acid chain; its full sequence is Transcription factor S-II-related protein (173 aa).

Positions 9–129 (ISDKEREIVI…EETLNQMATV (121 aa)) constitute a TFIIS central domain. The TFIIS-type zinc-finger motif lies at 130-170 (EWKPCYACKNTSYHFYQLQTRSADEPMTTFYICKNCMKTYK). 4 residues coordinate Zn(2+): Cys134, Cys137, Cys162, and Cys165.

It belongs to the TFS-II family.

The protein is Transcription factor S-II-related protein of Acanthamoeba polyphaga mimivirus (APMV).